Reading from the N-terminus, the 241-residue chain is tRNA pseudouridine synthase A (241 aa).

Catalysis depends on aspartate 51, which acts as the Nucleophile. Tyrosine 110 serves as a coordination point for substrate.

This sequence belongs to the tRNA pseudouridine synthase TruA family. As to quaternary structure, homodimer.

The enzyme catalyses uridine(38/39/40) in tRNA = pseudouridine(38/39/40) in tRNA. Functionally, formation of pseudouridine at positions 38, 39 and 40 in the anticodon stem and loop of transfer RNAs. In Campylobacter jejuni subsp. doylei (strain ATCC BAA-1458 / RM4099 / 269.97), this protein is tRNA pseudouridine synthase A.